Consider the following 424-residue polypeptide: Glutamyl-tRNA(Gln) amidotransferase subunit D (424 aa).

The interval 56 to 78 (GETANGSRNGGKGCKTNEEELPE) is disordered. The Asparaginase/glutaminase domain maps to 84 to 413 (PKIAILSTGG…EKAAGMLRED (330 aa)). Catalysis depends on residues T94, T170, D171, and K247.

Belongs to the asparaginase 1 family. GatD subfamily. Heterodimer of GatD and GatE.

It catalyses the reaction L-glutamyl-tRNA(Gln) + L-glutamine + ATP + H2O = L-glutaminyl-tRNA(Gln) + L-glutamate + ADP + phosphate + H(+). Its function is as follows. Allows the formation of correctly charged Gln-tRNA(Gln) through the transamidation of misacylated Glu-tRNA(Gln) in organisms which lack glutaminyl-tRNA synthetase. The reaction takes place in the presence of glutamine and ATP through an activated gamma-phospho-Glu-tRNA(Gln). The GatDE system is specific for glutamate and does not act on aspartate. This chain is Glutamyl-tRNA(Gln) amidotransferase subunit D, found in Methanosarcina acetivorans (strain ATCC 35395 / DSM 2834 / JCM 12185 / C2A).